Consider the following 233-residue polypeptide: Large ribosomal subunit protein uL1 (233 aa).

This sequence belongs to the universal ribosomal protein uL1 family. In terms of assembly, part of the 50S ribosomal subunit.

Binds directly to 23S rRNA. The L1 stalk is quite mobile in the ribosome, and is involved in E site tRNA release. In terms of biological role, protein L1 is also a translational repressor protein, it controls the translation of the L11 operon by binding to its mRNA. The sequence is that of Large ribosomal subunit protein uL1 from Psychrobacter cryohalolentis (strain ATCC BAA-1226 / DSM 17306 / VKM B-2378 / K5).